We begin with the raw amino-acid sequence, 345 residues long: RNA pseudouridine synthase 1 (345 aa).

The active site involves Asp134.

Belongs to the pseudouridine synthase RluA family.

It catalyses the reaction a uridine in RNA = a pseudouridine in RNA. The protein is RNA pseudouridine synthase 1 of Oryza sativa subsp. japonica (Rice).